A 163-amino-acid polypeptide reads, in one-letter code: Regulatory protein RecX (163 aa).

Positions 1–21 (MSDAEDIPTGRKRRPREQTPV) are disordered.

The protein belongs to the RecX family.

The protein resides in the cytoplasm. Functionally, modulates RecA activity. The protein is Regulatory protein RecX of Stenotrophomonas maltophilia (strain R551-3).